A 487-amino-acid chain; its full sequence is Acetyl-coenzyme A carboxylase carboxyl transferase subunit beta, chloroplastic (487 aa).

Positions 223 to 487 (LWVQCENCYG…LHAFFPLNQN (265 aa)) constitute a CoA carboxyltransferase N-terminal domain. Cys227, Cys230, Cys246, and Cys249 together coordinate Zn(2+). A C4-type zinc finger spans residues 227–249 (CENCYGLNYKKSFKSKMNLCEQC).

Belongs to the AccD/PCCB family. In terms of assembly, acetyl-CoA carboxylase is a heterohexamer composed of biotin carboxyl carrier protein, biotin carboxylase and 2 subunits each of ACCase subunit alpha and ACCase plastid-coded subunit beta (accD). Zn(2+) serves as cofactor.

Its subcellular location is the plastid. It is found in the chloroplast stroma. It carries out the reaction N(6)-carboxybiotinyl-L-lysyl-[protein] + acetyl-CoA = N(6)-biotinyl-L-lysyl-[protein] + malonyl-CoA. The protein operates within lipid metabolism; malonyl-CoA biosynthesis; malonyl-CoA from acetyl-CoA: step 1/1. Functionally, component of the acetyl coenzyme A carboxylase (ACC) complex. Biotin carboxylase (BC) catalyzes the carboxylation of biotin on its carrier protein (BCCP) and then the CO(2) group is transferred by the transcarboxylase to acetyl-CoA to form malonyl-CoA. This Panax ginseng (Korean ginseng) protein is Acetyl-coenzyme A carboxylase carboxyl transferase subunit beta, chloroplastic.